Here is a 73-residue protein sequence, read N- to C-terminus: Tetrahydromethanopterin S-methyltransferase subunit F (73 aa).

A helical membrane pass occupies residues Ile52–Phe72.

Belongs to the MtrF family. In terms of assembly, the complex is composed of 8 subunits; MtrA, MtrB, MtrC, MtrD, MtrE, MtrF, MtrG and MtrH.

It localises to the cell membrane. It catalyses the reaction 5-methyl-5,6,7,8-tetrahydromethanopterin + coenzyme M + 2 Na(+)(in) = 5,6,7,8-tetrahydromethanopterin + methyl-coenzyme M + 2 Na(+)(out). It participates in one-carbon metabolism; methanogenesis from CO(2); methyl-coenzyme M from 5,10-methylene-5,6,7,8-tetrahydromethanopterin: step 2/2. Part of a complex that catalyzes the formation of methyl-coenzyme M and tetrahydromethanopterin from coenzyme M and methyl-tetrahydromethanopterin. This is an energy-conserving, sodium-ion translocating step. This is Tetrahydromethanopterin S-methyltransferase subunit F from Methanosarcina barkeri (strain Fusaro / DSM 804).